Here is a 188-residue protein sequence, read N- to C-terminus: Ribose 1,5-bisphosphate phosphokinase PhnN (188 aa).

Residue 9-16 (GPSGAGKD) participates in ATP binding.

The protein belongs to the ribose 1,5-bisphosphokinase family.

It carries out the reaction alpha-D-ribose 1,5-bisphosphate + ATP = 5-phospho-alpha-D-ribose 1-diphosphate + ADP. Its pathway is metabolic intermediate biosynthesis; 5-phospho-alpha-D-ribose 1-diphosphate biosynthesis; 5-phospho-alpha-D-ribose 1-diphosphate from D-ribose 5-phosphate (route II): step 3/3. In terms of biological role, catalyzes the phosphorylation of ribose 1,5-bisphosphate to 5-phospho-D-ribosyl alpha-1-diphosphate (PRPP). This chain is Ribose 1,5-bisphosphate phosphokinase PhnN, found in Pectobacterium parmentieri (strain WPP163) (Pectobacterium wasabiae (strain WPP163)).